Reading from the N-terminus, the 307-residue chain is Cytochrome c1 2, heme protein, mitochondrial (307 aa).

The N-terminal 64 residues, 1–64 (MVGGGVIRQL…LLSFSTVASA (64 aa)), are a transit peptide targeting the mitochondrion. Over 65–270 (DEAEHGLECP…EPEMEERKLM (206 aa)) the chain is Mitochondrial intermembrane. Residues 90 to 197 (ASIRRGHQVY…NGQNYVFALL (108 aa)) form the Cytochrome c domain. C103, C106, H107, and M226 together coordinate heme c. A helical membrane pass occupies residues 271 to 288 (GFKWIFLLSLALLQAAYY). Topologically, residues 289 to 307 (RRLKWSVLKSRKLVLDVVN) are mitochondrial matrix.

Belongs to the cytochrome c family. In terms of assembly, component of the ubiquinol-cytochrome c oxidoreductase (cytochrome b-c1 complex, complex III, CIII), a multisubunit enzyme composed of 10 subunits. The complex is composed of 3 respiratory subunits cytochrome b (MT-CYB), cytochrome c1 (CYC1-1 or CYC1-2) and Rieske protein (UCR1-1 or UCR1-2), 2 core protein subunits MPPalpha1 (or MPPalpha2) and MPPB, and 5 low-molecular weight protein subunits QCR7-1 (or QCR7-2), UCRQ-1 (or UCRQ-2), QCR9, UCRY and probably QCR6-1 (or QCR6-2). The complex exists as an obligatory dimer and forms supercomplexes (SCs) in the inner mitochondrial membrane with NADH-ubiquinone oxidoreductase (complex I, CI), resulting in different assemblies (supercomplexes SCI(1)III(2) and SCI(2)III(4)). Post-translationally, binds 1 heme c group covalently per subunit.

The protein resides in the mitochondrion inner membrane. Component of the ubiquinol-cytochrome c oxidoreductase, a multisubunit transmembrane complex that is part of the mitochondrial electron transport chain which drives oxidative phosphorylation. The respiratory chain contains 3 multisubunit complexes succinate dehydrogenase (complex II, CII), ubiquinol-cytochrome c oxidoreductase (cytochrome b-c1 complex, complex III, CIII) and cytochrome c oxidase (complex IV, CIV), that cooperate to transfer electrons derived from NADH and succinate to molecular oxygen, creating an electrochemical gradient over the inner membrane that drives transmembrane transport and the ATP synthase. The cytochrome b-c1 complex catalyzes electron transfer from ubiquinol to cytochrome c, linking this redox reaction to translocation of protons across the mitochondrial inner membrane, with protons being carried across the membrane as hydrogens on the quinol. In the process called Q cycle, 2 protons are consumed from the matrix, 4 protons are released into the intermembrane space and 2 electrons are passed to cytochrome c. Cytochrome c1 is a catalytic core subunit containing a c-type heme. It transfers electrons from the [2Fe-2S] iron-sulfur cluster of the Rieske protein to cytochrome c. In Arabidopsis thaliana (Mouse-ear cress), this protein is Cytochrome c1 2, heme protein, mitochondrial (CYC1-2).